Reading from the N-terminus, the 139-residue chain is Gene 22 protein (139 aa).

This Mycobacterium phage D29 (Mycobacteriophage D29) protein is Gene 22 protein (22).